The following is a 302-amino-acid chain: Glycine--tRNA ligase alpha subunit (302 aa).

It belongs to the class-II aminoacyl-tRNA synthetase family. Tetramer of two alpha and two beta subunits.

It is found in the cytoplasm. It catalyses the reaction tRNA(Gly) + glycine + ATP = glycyl-tRNA(Gly) + AMP + diphosphate. The protein is Glycine--tRNA ligase alpha subunit of Haemophilus influenzae (strain PittGG).